The sequence spans 244 residues: Ribonuclease 3 (244 aa).

The RNase III domain maps to 5 to 136 (LAELERAIGI…LVGAIYLDQG (132 aa)). E49 is a Mg(2+) binding site. Residue D53 is part of the active site. Residues D122 and E125 each contribute to the Mg(2+) site. Residue E125 is part of the active site. One can recognise a DRBM domain in the interval 161-229 (DPTTRLQELM…ARKALAAWDK (69 aa)).

The protein belongs to the ribonuclease III family. In terms of assembly, homodimer. Mg(2+) serves as cofactor.

It is found in the cytoplasm. It catalyses the reaction Endonucleolytic cleavage to 5'-phosphomonoester.. Functionally, digests double-stranded RNA. Involved in the processing of primary rRNA transcript to yield the immediate precursors to the large and small rRNAs (23S and 16S). Processes some mRNAs, and tRNAs when they are encoded in the rRNA operon. Processes pre-crRNA and tracrRNA of type II CRISPR loci if present in the organism. The protein is Ribonuclease 3 of Chloroflexus aurantiacus (strain ATCC 29364 / DSM 637 / Y-400-fl).